We begin with the raw amino-acid sequence, 347 residues long: NADH-ubiquinone oxidoreductase chain 2 (347 aa).

The next 10 membrane-spanning stretches (helical) occupy residues 13–33 (IFAG…WVGL), 55–75 (AAIK…MAIL), 96–116 (LMIM…FWVP), 123–143 (PLMS…SIMY), 149–169 (LNVN…SWGG), 178–198 (ILAY…PYNP), 201–221 (TILN…LLNL), 247–267 (TLLS…WVII), 274–294 (NSLI…YFYL), and 326–346 (LPTL…MLMI).

This sequence belongs to the complex I subunit 2 family. As to quaternary structure, core subunit of respiratory chain NADH dehydrogenase (Complex I) which is composed of 45 different subunits. Interacts with TMEM242.

It is found in the mitochondrion inner membrane. It catalyses the reaction a ubiquinone + NADH + 5 H(+)(in) = a ubiquinol + NAD(+) + 4 H(+)(out). Functionally, core subunit of the mitochondrial membrane respiratory chain NADH dehydrogenase (Complex I) which catalyzes electron transfer from NADH through the respiratory chain, using ubiquinone as an electron acceptor. Essential for the catalytic activity and assembly of complex I. The polypeptide is NADH-ubiquinone oxidoreductase chain 2 (Pan paniscus (Pygmy chimpanzee)).